The chain runs to 146 residues: UPF0310 protein YdcG (146 aa).

The protein belongs to the UPF0310 family.

In Bacillus subtilis (strain 168), this protein is UPF0310 protein YdcG (ydcG).